A 434-amino-acid polypeptide reads, in one-letter code: MLLKNLHSLLQLPIFSNGADKGIEPNCPINIPLSCSNKTDIDNSCCFEYPGGIFLQTQFWNYFPSKNDLNETELVKELGPLDSFTIHGLWPDNCHGGYQQFCNRSLQIDDVYYLLHDKKFNNNDTSLQISGEKLLEYLDLYWKSNNGNHESLWIHEFNKHGTCISTIRPECYTEWGANSVDRKRAVYDYFRITYNLFKKLDTFSTLEKNNIVPSVDNSYSLEQIEAALSKEFEGKKVFIGCDRHNSLNEVWYYNHLKGSLLSEMFVPMDSLAIRTNCKKDGIKFFPKGYVPTFRRRPNKGARYRGVVRLSNINNGDQMQGFLIKNGHWMSQGTPANYELIKSPYGNYYLRTNQGFCDIISSSSNELVCKFRNIKDAGQFDFDPTKGGDGYIGYSGNYNWGGDTYPRRRNQSPIFSVDDEQNSKKYKFKLKFIKN.

Positions 1–18 (MLLKNLHSLLQLPIFSNG) are cleaved as a signal peptide. Disulfide bonds link cysteine 27/cysteine 46, cysteine 35/cysteine 94, cysteine 45/cysteine 171, cysteine 102/cysteine 163, and cysteine 241/cysteine 277. Residues asparagine 37 and asparagine 70 are each glycosylated (N-linked (GlcNAc...) asparagine). Histidine 87 is an active-site residue. 2 N-linked (GlcNAc...) asparagine glycosylation sites follow: asparagine 103 and asparagine 123. Active-site residues include glutamate 156 and histidine 160.

The protein belongs to the RNase T2 family. N-glycosylated.

The protein localises to the vacuole lumen. The protein resides in the cytoplasm. The enzyme catalyses a ribonucleotidyl-ribonucleotide-RNA + H2O = a 3'-end 3'-phospho-ribonucleotide-RNA + a 5'-end dephospho-ribonucleoside-RNA + H(+). Functionally, rnase which modulates cell survival under stress conditions. Released from the vacuole to the cytoplasm during stress to promote tRNA and rRNA cleavage and to activate separately a downstream pathway that promotes cell death. Involved in cell size, vacuolar morphology and growth at high temperatures and high salt concentration. The chain is Ribonuclease T2-like (RNY1) from Saccharomyces cerevisiae (strain ATCC 204508 / S288c) (Baker's yeast).